The chain runs to 320 residues: tRNA dimethylallyltransferase (320 aa).

ATP is bound at residue 10-17 (GPTASGKT). 12-17 (TASGKT) provides a ligand contact to substrate. Interaction with substrate tRNA stretches follow at residues 35–38 (DSAL), 159–163 (QRIQR), and 241–246 (RCVGYR).

This sequence belongs to the IPP transferase family. As to quaternary structure, monomer. Mg(2+) is required as a cofactor.

It carries out the reaction adenosine(37) in tRNA + dimethylallyl diphosphate = N(6)-dimethylallyladenosine(37) in tRNA + diphosphate. Functionally, catalyzes the transfer of a dimethylallyl group onto the adenine at position 37 in tRNAs that read codons beginning with uridine, leading to the formation of N6-(dimethylallyl)adenosine (i(6)A). This chain is tRNA dimethylallyltransferase, found in Aromatoleum aromaticum (strain DSM 19018 / LMG 30748 / EbN1) (Azoarcus sp. (strain EbN1)).